Here is a 203-residue protein sequence, read N- to C-terminus: Imidazoleglycerol-phosphate dehydratase (203 aa).

Positions 184–203 (DPRRSSQIPSSKGVLEQAGQ) are disordered.

This sequence belongs to the imidazoleglycerol-phosphate dehydratase family.

It is found in the cytoplasm. It carries out the reaction D-erythro-1-(imidazol-4-yl)glycerol 3-phosphate = 3-(imidazol-4-yl)-2-oxopropyl phosphate + H2O. It functions in the pathway amino-acid biosynthesis; L-histidine biosynthesis; L-histidine from 5-phospho-alpha-D-ribose 1-diphosphate: step 6/9. The chain is Imidazoleglycerol-phosphate dehydratase from Prochlorococcus marinus (strain NATL1A).